The sequence spans 360 residues: GTP 3',8-cyclase 2 (360 aa).

Residues 33 to 259 (TFGRVANDLR…PDPAPRGSAP (227 aa)) form the Radical SAM core domain. Position 42 (arginine 42) interacts with GTP. [4Fe-4S] cluster-binding residues include cysteine 49 and cysteine 53. Tyrosine 55 lines the S-adenosyl-L-methionine pocket. Cysteine 56 contacts [4Fe-4S] cluster. Arginine 93 serves as a coordination point for GTP. Glycine 97 serves as a coordination point for S-adenosyl-L-methionine. Threonine 124 lines the GTP pocket. Serine 148 lines the S-adenosyl-L-methionine pocket. Lysine 185 is a GTP binding site. S-adenosyl-L-methionine is bound at residue methionine 219. Residues cysteine 287 and cysteine 290 each contribute to the [4Fe-4S] cluster site. Residue 292-294 (RTR) participates in GTP binding. [4Fe-4S] cluster is bound at residue cysteine 304.

It belongs to the radical SAM superfamily. MoaA family. As to quaternary structure, monomer and homodimer. [4Fe-4S] cluster is required as a cofactor.

It catalyses the reaction GTP + AH2 + S-adenosyl-L-methionine = (8S)-3',8-cyclo-7,8-dihydroguanosine 5'-triphosphate + 5'-deoxyadenosine + L-methionine + A + H(+). It functions in the pathway cofactor biosynthesis; molybdopterin biosynthesis. Catalyzes the cyclization of GTP to (8S)-3',8-cyclo-7,8-dihydroguanosine 5'-triphosphate. The polypeptide is GTP 3',8-cyclase 2 (Mycobacterium bovis (strain ATCC BAA-935 / AF2122/97)).